We begin with the raw amino-acid sequence, 291 residues long: Transmembrane protein 41B (291 aa).

Residues 1-11 show a composition bias toward basic and acidic residues; that stretch reads MAKGRVAERSQ. Residues 1-38 are disordered; sequence MAKGRVAERSQTEMLHSTPAGDRAVGTQGSAAPGNKDH. T18 is modified (phosphothreonine). 6 helical membrane-spanning segments follow: residues 52–72, 109–129, 147–169, 197–217, 225–245, and 262–282; these read TSLL…FLVY, FYVQ…TFAI, LALF…LSYL, LINY…FINI, PLKV…FVAI, and SWNS…PAIF. Residues 140–251 are VTT domain; required for its function in autophagy; the sequence is GFLYPFPLAL…FVAIKAGTTL (112 aa).

It belongs to the TMEM41 family. As to quaternary structure, interacts with VMP1. Interacts with COPA, COPB1, VDAC1 and ERLIN2. Interacts with ATG2A. Interacts with SURF4.

The protein localises to the endoplasmic reticulum membrane. It localises to the endomembrane system. The catalysed reaction is a 1,2-diacyl-sn-glycero-3-phospho-L-serine(in) = a 1,2-diacyl-sn-glycero-3-phospho-L-serine(out). The enzyme catalyses cholesterol(in) = cholesterol(out). It carries out the reaction a 1,2-diacyl-sn-glycero-3-phosphocholine(in) = a 1,2-diacyl-sn-glycero-3-phosphocholine(out). It catalyses the reaction a 1,2-diacyl-sn-glycero-3-phosphoethanolamine(in) = a 1,2-diacyl-sn-glycero-3-phosphoethanolamine(out). Phospholipid scramblase involved in lipid homeostasis and membrane dynamics processes. Has phospholipid scramblase activity toward cholesterol and phosphatidylserine, as well as phosphatidylethanolamine and phosphatidylcholine. Required for autophagosome formation: participates in early stages of autophagosome biogenesis at the endoplasmic reticulum (ER) membrane by reequilibrating the leaflets of the ER as lipids are extracted by ATG2 (ATG2A or ATG2B) to mediate autophagosome assembly. In addition to autophagy, involved in other processes in which phospholipid scramblase activity is required. Required for normal motor neuron development. The chain is Transmembrane protein 41B from Rattus norvegicus (Rat).